The chain runs to 419 residues: MKFVIKSISKNSGRLGQLRIGKESNELQTPLLMQTTKGGSIPYLSGDVFDSVCKGQQQQQLLQLTLSTMDQMAESLVQWNRSLSEYVGLPGHATVLLLRDPCETTPAGGNDRDVVPLFTRRGKESLTATRYLELVSSFAPDVYQGLCDADTNPDSTKKRVQKSVDRTERFMEQCYERRVENSTLLAPIVGGYNTFARTQSIKHARQQPAGSYGGYILEGFHSNGLAATELKATQLLPIVEHCVQQLEEEQPRLMPGAYTPLLMLELIRQGIDIFDTSYAYCAAVNYKALSFSYKLDEIRPDDEHTPLLDMTAEEYKEQFKPLLSGCTCLACEKHTRAYHHHLYKTHELLGPILLMIHNLHHLMGFFDVIRASIGTDQLPALLEHLRMQNTSTEINYRIEPNNKIVTKAAMGKGFIAPAV.

Zn(2+)-binding residues include Cys-326, Cys-328, Cys-331, and His-357.

The protein belongs to the queuine tRNA-ribosyltransferase family. QTRT2 subfamily. As to quaternary structure, heterodimer of a catalytic subunit and an accessory subunit. The cofactor is Zn(2+).

It is found in the cytoplasm. Non-catalytic subunit of the queuine tRNA-ribosyltransferase (TGT) that catalyzes the base-exchange of a guanine (G) residue with queuine (Q) at position 34 (anticodon wobble position) in tRNAs with GU(N) anticodons (tRNA-Asp, -Asn, -His and -Tyr), resulting in the hypermodified nucleoside queuosine (7-(((4,5-cis-dihydroxy-2-cyclopenten-1-yl)amino)methyl)-7-deazaguanosine). The polypeptide is Queuine tRNA-ribosyltransferase accessory subunit 2 (Drosophila grimshawi (Hawaiian fruit fly)).